The chain runs to 510 residues: 2,3-bisphosphoglycerate-independent phosphoglycerate mutase (510 aa).

Residues D14 and S64 each coordinate Mn(2+). Catalysis depends on S64, which acts as the Phosphoserine intermediate. Residues H125, 155-156, R187, R193, 259-262, and K332 contribute to the substrate site; these read RD and RADR. The Mn(2+) site is built by D399, H403, D440, H441, and H459.

This sequence belongs to the BPG-independent phosphoglycerate mutase family. Monomer. Mn(2+) serves as cofactor.

The enzyme catalyses (2R)-2-phosphoglycerate = (2R)-3-phosphoglycerate. It functions in the pathway carbohydrate degradation; glycolysis; pyruvate from D-glyceraldehyde 3-phosphate: step 3/5. Functionally, catalyzes the interconversion of 2-phosphoglycerate and 3-phosphoglycerate. Essential for the growth and pathogenicity on the host plant. This is 2,3-bisphosphoglycerate-independent phosphoglycerate mutase from Pseudomonas syringae pv. tomato (strain ATCC BAA-871 / DC3000).